An 891-amino-acid chain; its full sequence is Metabotropic glutamate receptor-like protein N (891 aa).

The Extracellular portion of the chain corresponds to 1-399 (MKLYTHKINR…FKPISKTIEY (399 aa)). N-linked (GlcNAc...) asparagine glycosylation is found at Asn-52, Asn-85, Asn-88, Asn-125, Asn-132, Asn-224, Asn-298, Asn-312, Asn-320, Asn-325, Asn-353, Asn-363, and Asn-375. The interval 52 to 91 (NNSNSNSNNNNNNNNNNNNNNNNNNNNNNNNNNNNSNNSN) is disordered. Residues 400–420 (GITIVSSILIGALIIIQICII) form a helical membrane-spanning segment. The Cytoplasmic portion of the chain corresponds to 421-433 (KYKNKPSFKSASP). A helical membrane pass occupies residues 434–454 (TFLIFIVIGGIFVYIGVIIWV). Over 455–461 (SGVNVFT) the chain is Extracellular. The helical transmembrane segment at 462–482 (CNAKFWLISLGLTTMIGGIVV) threads the bilayer. The Cytoplasmic portion of the chain corresponds to 483 to 505 (KNFRIWLIFDNPKLYHIKITNLQ). Residues 506–526 (LLPWVLGMFLLNVFLLSLITG) form a helical membrane-spanning segment. The Extracellular segment spans residues 527–555 (LGKLTPFKVFPNDEKFSSYEIQCEMMDGG). Residues 556–576 (LIALYFLLGYFAIIVMIGIFV) form a helical membrane-spanning segment. Topologically, residues 577 to 592 (SWKIRIVDIEEFNESK) are cytoplasmic. A helical transmembrane segment spans residues 593–613 (SVAYSLYSIVFCLLIIAPLTI). Topologically, residues 614 to 625 (SKTGHNTEILCS) are extracellular. A helical membrane pass occupies residues 626–646 (GFIFIVAAIITIMFIPKFWAL). The Cytoplasmic portion of the chain corresponds to 647 to 891 (KIYGAEGSNE…SDSNSDSIIQ (245 aa)). Disordered regions lie at residues 660-689 (QSSS…KKSS), 742-827 (NEMT…ILTP), and 869-891 (DEVI…SIIQ). The span at 742–767 (NEMTYNDDPTYTEPSEQPTYTESSEQ) shows a compositional bias: polar residues. A compositionally biased stretch (low complexity) spans 772 to 782 (PRTLTATPRTN). Polar residues predominate over residues 783-820 (DLTTPRTNDLTTPRTNDLITPRTNDLSTPRTNDLNTPR). Over residues 872–881 (IENSDSESES) the composition is skewed to acidic residues. The span at 882–891 (SDSNSDSIIQ) shows a compositional bias: low complexity.

Belongs to the G-protein coupled receptor 3 family. GABA-B receptor subfamily.

Its subcellular location is the membrane. In Dictyostelium discoideum (Social amoeba), this protein is Metabotropic glutamate receptor-like protein N (grlN).